A 498-amino-acid chain; its full sequence is Zinc finger protein 497 (498 aa).

The disordered stretch occupies residues 30–104; the sequence is SEGAVSGGWG…LRPSPLPEEP (75 aa). 14 consecutive C2H2-type zinc fingers follow at residues 106 to 128, 134 to 156, 162 to 184, 190 to 212, 218 to 240, 246 to 268, 274 to 296, 302 to 324, 330 to 352, 358 to 380, 386 to 408, 414 to 436, 442 to 464, and 470 to 492; these read CRCG…RRVH, YTCP…QRIH, YACR…QETH, FRCP…RRTH, YECP…RRVH, HACR…LKIH, HACP…RRTH, FPCA…QRTH, FECA…RRVH, HACA…RRTH, FACA…RLSH, FACA…QRLH, FVCA…RRTH, and YACG…QKRH.

The protein belongs to the krueppel C2H2-type zinc-finger protein family.

The protein resides in the nucleus. May be involved in transcriptional regulation. In Homo sapiens (Human), this protein is Zinc finger protein 497 (ZNF497).